Reading from the N-terminus, the 135-residue chain is UPF0329 protein ECU07_1860/ECU10_0040/ECU11_2100 (135 aa).

It belongs to the UPF0329 family.

This chain is UPF0329 protein ECU07_1860/ECU10_0040/ECU11_2100, found in Encephalitozoon cuniculi (strain GB-M1) (Microsporidian parasite).